Consider the following 100-residue polypeptide: NADH-quinone oxidoreductase subunit K (100 aa).

A run of 3 helical transmembrane segments spans residues 4–24, 29–49, and 63–83; these read ITYYLLLAAALFCMGMFGVLV, LVVFMSVELMLNAANLTFVAF, and FFVIAVAAAEAAIGLAIVIAV.

Belongs to the complex I subunit 4L family. As to quaternary structure, NDH-1 is composed of 14 different subunits. Subunits NuoA, H, J, K, L, M, N constitute the membrane sector of the complex.

Its subcellular location is the cell inner membrane. It carries out the reaction a quinone + NADH + 5 H(+)(in) = a quinol + NAD(+) + 4 H(+)(out). In terms of biological role, NDH-1 shuttles electrons from NADH, via FMN and iron-sulfur (Fe-S) centers, to quinones in the respiratory chain. The immediate electron acceptor for the enzyme in this species is believed to be ubiquinone. Couples the redox reaction to proton translocation (for every two electrons transferred, four hydrogen ions are translocated across the cytoplasmic membrane), and thus conserves the redox energy in a proton gradient. This Myxococcus xanthus (strain DK1622) protein is NADH-quinone oxidoreductase subunit K.